A 137-amino-acid polypeptide reads, in one-letter code: MLQPKRTKYRKQFKGRIKGVAKGGSDLAFGEFGLKAQEPNRVNAREIEAARRAITRYMKRAGRVWIRVFPDVPVTKKPTEVRMGKGKGSVEYWACKVKPGRMMFEIDGVSEEIAREALRLGSAKLSVKTRFVQRIAE.

The protein belongs to the universal ribosomal protein uL16 family. In terms of assembly, part of the 50S ribosomal subunit.

Functionally, binds 23S rRNA and is also seen to make contacts with the A and possibly P site tRNAs. The chain is Large ribosomal subunit protein uL16 from Rhizobium johnstonii (strain DSM 114642 / LMG 32736 / 3841) (Rhizobium leguminosarum bv. viciae).